The primary structure comprises 382 residues: 1-deoxy-D-xylulose 5-phosphate reductoisomerase (382 aa).

Positions 10, 11, 12, 13, 36, 37, 38, and 121 each coordinate NADPH. K122 is a binding site for 1-deoxy-D-xylulose 5-phosphate. NADPH is bound at residue E123. A Mn(2+)-binding site is contributed by D147. Residues S148, E149, S173, and H196 each coordinate 1-deoxy-D-xylulose 5-phosphate. E149 contributes to the Mn(2+) binding site. Position 202 (G202) interacts with NADPH. Residues S209, N214, K215, and E218 each contribute to the 1-deoxy-D-xylulose 5-phosphate site. Mn(2+) is bound at residue E218.

Belongs to the DXR family. It depends on Mg(2+) as a cofactor. Requires Mn(2+) as cofactor.

It carries out the reaction 2-C-methyl-D-erythritol 4-phosphate + NADP(+) = 1-deoxy-D-xylulose 5-phosphate + NADPH + H(+). It functions in the pathway isoprenoid biosynthesis; isopentenyl diphosphate biosynthesis via DXP pathway; isopentenyl diphosphate from 1-deoxy-D-xylulose 5-phosphate: step 1/6. Its function is as follows. Catalyzes the NADPH-dependent rearrangement and reduction of 1-deoxy-D-xylulose-5-phosphate (DXP) to 2-C-methyl-D-erythritol 4-phosphate (MEP). The chain is 1-deoxy-D-xylulose 5-phosphate reductoisomerase from Geobacillus kaustophilus (strain HTA426).